The chain runs to 269 residues: Tryptophan synthase alpha chain (269 aa).

Active-site proton acceptor residues include E45 and D56.

It belongs to the TrpA family. As to quaternary structure, tetramer of two alpha and two beta chains.

It carries out the reaction (1S,2R)-1-C-(indol-3-yl)glycerol 3-phosphate + L-serine = D-glyceraldehyde 3-phosphate + L-tryptophan + H2O. It participates in amino-acid biosynthesis; L-tryptophan biosynthesis; L-tryptophan from chorismate: step 5/5. Its function is as follows. The alpha subunit is responsible for the aldol cleavage of indoleglycerol phosphate to indole and glyceraldehyde 3-phosphate. The chain is Tryptophan synthase alpha chain from Shouchella clausii (strain KSM-K16) (Alkalihalobacillus clausii).